Here is a 560-residue protein sequence, read N- to C-terminus: Chaperonin GroEL 2 (560 aa).

ATP-binding positions include 29-32, 86-90, Gly-413, 478-480, and Asp-494; these read TLGP, DGTTT, and NAA.

Belongs to the chaperonin (HSP60) family. Forms a cylinder of 14 subunits composed of two heptameric rings stacked back-to-back. Interacts with the co-chaperonin GroES.

The protein localises to the cytoplasm. The enzyme catalyses ATP + H2O + a folded polypeptide = ADP + phosphate + an unfolded polypeptide.. Its function is as follows. Together with its co-chaperonin GroES, plays an essential role in assisting protein folding. The GroEL-GroES system forms a nano-cage that allows encapsulation of the non-native substrate proteins and provides a physical environment optimized to promote and accelerate protein folding. The chain is Chaperonin GroEL 2 from Nostoc sp. (strain PCC 7120 / SAG 25.82 / UTEX 2576).